We begin with the raw amino-acid sequence, 387 residues long: O-methyltransferase fsr2 (387 aa).

Asp-231 is a binding site for S-adenosyl-L-methionine. His-280 serves as the catalytic Proton acceptor.

The protein belongs to the class I-like SAM-binding methyltransferase superfamily. Cation-independent O-methyltransferase family. COMT subfamily.

It participates in polyketide biosynthesis. In terms of biological role, O-methyltransferase; part of the gene cluster that mediates the biosynthesis of fusarubins, highly pigmented naphthoquinones responsible for the coloration of the fruiting bodies. The non-reducing polyketide synthase FSR1 is responsible for the condensation of seven acetyl-CoA units to yield a haptaketide. After rings A and B are formed by aldol-type cyclization, the PKS-derived product is released as 6-O-demethylfusarubinaldehyde. Then, two hydroxyl groups at C-5 and C-10 are incorporated by FSR3, and simultaneously hydroxyl groups at C-6 and C-8 are methylated by FSR2. The aldehyde is, on the one hand, reduced by FSR3 to 8-O-methylfusarubin alcohol, which equilibrates mainly with 8-O-methylfusarubin and only small amounts of 8-O-methylnectriafurone. On the other hand, the aldehyde can be oxidized to form 8-O-methylfusarubinic acid, a reaction driven by FSR3 equilibrating with 8-O-methylfusarubinlactone, finally resulting in 8-O-methylanhydrofusarubinlactol after a further reduction step and loss of water. 8-O-Methylfusarubinic acid can also undergo decarboxylation, resulting in 8-O-methyl-13-hydroxynorjavanicin after another hydroxylation step at C-13. Both steps are most likely also accomplished by FSR3. No enzymatic function has been determined so far for either FSR4 and FSR5. Their deletion does not alter the product spectrum, but the possibility that they catalyze specific enzymatic steps during perithecium development cannot be ruled out. FSR4 might possess a regulatory function in the biosynthesis of fusarubins. The chain is O-methyltransferase fsr2 from Gibberella fujikuroi (strain CBS 195.34 / IMI 58289 / NRRL A-6831) (Bakanae and foot rot disease fungus).